We begin with the raw amino-acid sequence, 323 residues long: Acetyl esterase (323 aa).

Residues His91 to Gly93 carry the Involved in the stabilization of the negatively charged intermediate by the formation of the oxyanion hole motif. Active-site residues include Ser165, Asp262, and His292.

Belongs to the 'GDXG' lipolytic enzyme family. As to quaternary structure, homodimer. Interacts with MalT and MelA.

It is found in the cytoplasm. In terms of biological role, displays esterase activity towards short chain fatty esters (acyl chain length of up to 8 carbons). Able to hydrolyze triacetylglycerol (triacetin) and tributyrylglycerol (tributyrin), but not trioleylglycerol (triolein) or cholesterol oleate. Negatively regulates MalT activity by antagonizing maltotriose binding. Inhibits MelA galactosidase activity. The chain is Acetyl esterase from Salmonella choleraesuis (strain SC-B67).